The sequence spans 318 residues: NADH-ubiquinone oxidoreductase chain 1 (318 aa).

Transmembrane regions (helical) follow at residues 2–22, 70–90, 100–120, 147–167, 171–191, 217–237, 253–273, and 294–314; these read FMINVLLLIVPILLAVAFLTL, MFIIAPILALTLALTMWIPLP, LGILFMLAMSSLAVYSILWSG, AIILLSVLLMSGSFTLSTLII, YLWLIFPSWPLAMMWFISTLA, AGPFALFFLAEYANIIMMNIF, ELYSINFTIKALLLTCSFLWI, and LPLTLALCMWHVSLPIMLSSI.

Belongs to the complex I subunit 1 family. Core subunit of respiratory chain NADH dehydrogenase (Complex I) which is composed of 45 different subunits.

The protein resides in the mitochondrion inner membrane. The enzyme catalyses a ubiquinone + NADH + 5 H(+)(in) = a ubiquinol + NAD(+) + 4 H(+)(out). Core subunit of the mitochondrial membrane respiratory chain NADH dehydrogenase (Complex I) which catalyzes electron transfer from NADH through the respiratory chain, using ubiquinone as an electron acceptor. Essential for the catalytic activity and assembly of complex I. This is NADH-ubiquinone oxidoreductase chain 1 (MT-ND1) from Equus caballus (Horse).